A 189-amino-acid polypeptide reads, in one-letter code: Flavin prenyltransferase UbiX (189 aa).

FMN-binding positions include 10-12, Ser36, 91-94, and Arg126; these read GAS and STNT. 2 residues coordinate dimethylallyl phosphate: Tyr156 and Lys172.

The protein belongs to the UbiX/PAD1 family.

It carries out the reaction dimethylallyl phosphate + FMNH2 = prenylated FMNH2 + phosphate. In terms of biological role, flavin prenyltransferase that catalyzes the synthesis of the prenylated FMN cofactor (prenyl-FMN) for 4-hydroxy-3-polyprenylbenzoic acid decarboxylase UbiD. The prenyltransferase is metal-independent and links a dimethylallyl moiety from dimethylallyl monophosphate (DMAP) to the flavin N5 and C6 atoms of FMN. The sequence is that of Flavin prenyltransferase UbiX from Aquifex aeolicus (strain VF5).